The primary structure comprises 340 residues: Acidic endochitinase WIN6 (340 aa).

A signal peptide spans 1–22 (MSVWALFAFFSLFLSLSVRGSA). The Chitin-binding type-1 domain maps to 23 to 63 (EQCGRQAGDALCPGGLCCSSYGWCGTTVDYCGIGCQSQCDG). Cystine bridges form between cysteine 25–cysteine 40, cysteine 34–cysteine 46, cysteine 39–cysteine 53, and cysteine 57–cysteine 61. Residues 64–85 (GGGGDGGDDGCDGGDDGGGDGD) are spacer. Positions 86-340 (DGYLSDIIPK…YGLSGLKDTM (255 aa)) are chitinase. 3 cysteine pairs are disulfide-bonded: cysteine 110–cysteine 172, cysteine 183–cysteine 191, and cysteine 290–cysteine 323. The active-site Proton donor is the glutamate 154.

It belongs to the glycosyl hydrolase 19 family. Chitinase class I subfamily.

The catalysed reaction is Random endo-hydrolysis of N-acetyl-beta-D-glucosaminide (1-&gt;4)-beta-linkages in chitin and chitodextrins.. Its function is as follows. Defense against chitin-containing fungal pathogens. This is Acidic endochitinase WIN6 (WIN6) from Populus trichocarpa (Western balsam poplar).